We begin with the raw amino-acid sequence, 434 residues long: MKLSHLAAALSAQLVAPVAAGYLRQDILTAGTLRNTTVPAAPNEDLNQIVSDSQLLSLHRTICEIESVSNHESTVGEALIKYLGEHDFTTEKQIVPVDEDDDSTDERYNVWAYPKGSPKPKIILTSHIDTVPPHINYSLHAPEGDFDRANITIKGRGTVDAKASVAAMIIAALDHMKESPDVPVGLLFVVSEERGGTGMIHFSDSELNTSPPFFHTLIFGEPTELKLVDGHKGNLRFDVEAKGVSAHSGYPWLGHSAISEILPVLARIDGLGDIPVEDGGLPSSEKYGSTTLNIGTVRGGAAGNVVPESASASVAVRLADGTVEDAQDIIRKAVADASGGSKNITLKFPDDKAYPPIDLDTDVDGFELLTVNYGTDIPKLDIHDEDSDVKVKRYLYGPGTILVAHGVDEGLTVGDLEKAVEGYSKLIDAAVKRG.

The first 20 residues, 1–20 (MKLSHLAAALSAQLVAPVAA), serve as a signal peptide directing secretion. N35, N136, and N150 each carry an N-linked (GlcNAc...) asparagine glycan. Zn(2+) is bound at residue D160. E192 acts as the Proton acceptor in catalysis. A Zn(2+)-binding site is contributed by E193. A glycan (N-linked (GlcNAc...) asparagine) is linked at N343.

This sequence belongs to the peptidase M20A family. Requires Zn(2+) as cofactor.

It localises to the secreted. The sequence is that of Probable carboxypeptidase BDBG_01803 from Blastomyces gilchristii (strain SLH14081) (Blastomyces dermatitidis).